The primary structure comprises 350 residues: UDP-glucose 4-epimerase 2 (350 aa).

NAD(+) contacts are provided by residues 12-14 (GYI), 33-37 (DNYDN), 63-64 (DL), F85, and K89. Substrate is bound at residue 129–131 (SAT). Y153 acts as the Proton acceptor in catalysis. 2 residues coordinate NAD(+): K157 and Y181. Substrate contacts are provided by residues 181–183 (YFN), 202–204 (NNL), 220–222 (TVF), R235, and 297–300 (RPGD).

The protein belongs to the NAD(P)-dependent epimerase/dehydratase family. Forms homodimers and heterodimers. The cofactor is NAD(+). As to expression, widely expressed. Most highly expressed in stems and flowers.

It is found in the cytoplasm. It catalyses the reaction UDP-alpha-D-glucose = UDP-alpha-D-galactose. It participates in carbohydrate metabolism; galactose metabolism. Its activity is regulated as follows. Enhanced activity by NaCl. Enhanced activity by NAD(+). Strongly inhibited by UDP. Functionally, catalyzes the interconversion between UDP-glucose and UDP-galactose. Cooperates with UGE3 in pollen development and with UGE4 in cell wall carbohydrate biosynthesis and growth. This is UDP-glucose 4-epimerase 2 from Arabidopsis thaliana (Mouse-ear cress).